The sequence spans 216 residues: ATP synthase subunit 5, mitochondrial (216 aa).

Belongs to the ATPase delta chain family. F-type ATPases have 2 components, CF(1) - the catalytic core - and CF(0) - the membrane proton channel. CF(1) has five subunits: alpha(3), beta(3), gamma(1), delta(1), epsilon(1). CF(0) has three main subunits: a, b and c.

The protein resides in the mitochondrion. The protein localises to the mitochondrion inner membrane. Functionally, mitochondrial membrane ATP synthase (F(1)F(0) ATP synthase or Complex V) produces ATP from ADP in the presence of a proton gradient across the membrane which is generated by electron transport complexes of the respiratory chain. F-type ATPases consist of two structural domains, F(1) - containing the extramembraneous catalytic core and F(0) - containing the membrane proton channel, linked together by a central stalk and a peripheral stalk. During catalysis, ATP synthesis in the catalytic domain of F(1) is coupled via a rotary mechanism of the central stalk subunits to proton translocation. Part of the complex F(0) domain and the peripheric stalk, which acts as a stator to hold the catalytic alpha(3)beta(3) subcomplex and subunit a/ATP6 static relative to the rotary elements. This Schizosaccharomyces pombe (strain 972 / ATCC 24843) (Fission yeast) protein is ATP synthase subunit 5, mitochondrial (atp5).